The primary structure comprises 398 residues: Cytohesin-1 (398 aa).

M1 is subject to N-acetylmethionine. Residues 1-60 (MEDDDSYVPSDLTAEERQELENIRRRKQELLADIQRLKEEIAEVANEIESLGSTEERKNM) form a necessary for localization at adherens junction region. A coiled-coil region spans residues 10 to 67 (SDLTAEERQELENIRRRKQELLADIQRLKEEIAEVANEIESLGSTEERKNMQRNKQVA). Residues 73–202 (FNMDPKKGIQ…IIMLNTSLHN (130 aa)) form the SEC7 domain. The PH domain occupies 260–377 (NPDREGWLLK…WIKCIKAAIS (118 aa)). Residues 269 to 277 (KLGGGRVKT), R281, Y292, R302, and N351 contribute to the a 1,2-diacyl-sn-glycero-3-phospho-(1D-myo-inositol-3,4,5-trisphosphate) site. Positions 388 to 396 (RKKKVSSTK) are C-terminal autoinhibitory region.

In terms of assembly, interacts with TRIM23 and CYTIP. Interacts (via coiled-coil domain) with FRMD4A (via coiled-coil domain). Interacts with FRMD4B. Found in a complex with PARD3, CYTH1 and FRMD4A. Interacts (via N-terminal domain) with INAVA (via N-terminal domain). Post-translationally, ubiquitinated by SCF(FBXW11) E3 ubiquitin-protein ligase complex. Ubiquitination induces proteasomal degradation. As to expression, expressed in colon and small intestine (at protein level).

The protein resides in the cell membrane. It is found in the cytoplasm. The protein localises to the cytosol. It localises to the cell junction. Its subcellular location is the tight junction. The protein resides in the adherens junction. Its function is as follows. Promotes guanine-nucleotide exchange on ARF1, ARF5 and ARF6. Promotes the activation of ARF factors through replacement of GDP with GTP. Plays an important role in membrane trafficking, during junctional remodeling and epithelial polarization, through regulation of ARF6 activity. The chain is Cytohesin-1 (Cyth1) from Mus musculus (Mouse).